A 1482-amino-acid polypeptide reads, in one-letter code: Cystic fibrosis transmembrane conductance regulator (1482 aa).

The Cytoplasmic segment spans residues 1–77 (MQRSPLEKAS…KLINALQRCF (77 aa)). A helical membrane pass occupies residues 78 to 98 (FWRFTFYGILLYLGEVTKAIQ). The region spanning 81-365 (FTFYGILLYL…WAVQTWYDSL (285 aa)) is the ABC transmembrane type-1 1 domain. At 99-122 (PLLLGRIIASYDPDNKMERSIAIY) the chain is on the extracellular side. The chain crosses the membrane as a helical span at residues 123–146 (LGIGLCLLFIMRTLLLHPAIFGLH). Topologically, residues 147–195 (HIGMQMRIALFSLIYKKTLKLSSRVLDKISIGQLVSLLSNNLNKFDEGL) are cytoplasmic. A helical membrane pass occupies residues 196-216 (ALAHFVWIAPLQVMLLMGLLW). Over 217-222 (ELLQAS) the chain is Extracellular. Residues 223-243 (AFCGLAFLIVLALLQAGLGRM) form a helical membrane-spanning segment. At 244-298 (MMKYRDQRAGKINERLVITSEMIENIQSVKAYCWEEAMEKMIENLRQTELRLTRK) the chain is on the cytoplasmic side. A helical transmembrane segment spans residues 299–319 (AAYVRYVNSSAFFFSGFFVVF). The Extracellular portion of the chain corresponds to 320-339 (LSVLPYALIKGIILRKIFTT). Residues 340 to 358 (ISFCIVLRMAVTRQFPWAV) form a helical membrane-spanning segment. Topologically, residues 359 to 859 (QTWYDSLGAI…YLRYITVHKN (501 aa)) are cytoplasmic. ATP contacts are provided by residues W401, 458-465 (GSTGAGKT), and Q493. The 224-residue stretch at 423 to 646 (SGDNRLFFSN…RPDFSSKLMG (224 aa)) folds into the ABC transporter 1 domain. A lipid anchor (S-palmitoyl cysteine) is attached at C524. Phosphoserine is present on residues S549 and S660. The tract at residues 654–832 (SAERRNSILT…EEINEEDLKE (179 aa)) is disordered R region. A Phosphoserine; by PKA modification is found at S670. S686 carries the post-translational modification Phosphoserine. A Glycyl lysine isopeptide (Lys-Gly) (interchain with G-Cter in ubiquitin) cross-link involves residue K688. Phosphoserine occurs at positions 700 and 712. A Phosphothreonine modification is found at T717. S737, S768, S791, S796, and S814 each carry phosphoserine. The chain crosses the membrane as a helical span at residues 860 to 880 (LIFVLIWCLVIFLAEVAASLV). In terms of domain architecture, ABC transmembrane type-1 2 spans 860–1156 (LIFVLIWCLV…AVNSSIDVDS (297 aa)). Over 881–919 (AFWLIEKTRPQDKGNSTRSTNNTSPVIITSTSAFYMFYI) the chain is Extracellular. N-linked (GlcNAc...) asparagine glycans are attached at residues N895 and N901. Residues 920 to 940 (YVGVADSLLALGFLRGLPLVH) form a discontinuously helical membrane-spanning segment. Residues 941 to 991 (TLITVSKILHQKMLHSVLHAPMSTLNTLKAGAILNRFSKDIAILDDLLPLT) are Cytoplasmic-facing. Residues 992-1012 (IFDFIQLVLIVIGAVVVVSIL) traverse the membrane as a helical segment. The Extracellular segment spans residues 1013–1014 (KP). Residues 1015–1035 (YIFLAAVPVIIAFVILRAYFL) traverse the membrane as a helical segment. The Cytoplasmic segment spans residues 1036 to 1096 (QTSQQLKQLE…TATWFLYLST (61 aa)). A helical membrane pass occupies residues 1097–1117 (LRWFQMRIEMIFVVFFVAVTF). At 1118-1131 (ISILTTGEGEGTVG) the chain is on the extracellular side. A helical membrane pass occupies residues 1132 to 1152 (IILTLAMNIMSTLQWAVNSSI). Topologically, residues 1153–1482 (DVDSLMRSVS…AEEEVQDTRL (330 aa)) are cytoplasmic. Positions 1212–1445 (ITVKDLTAKY…KSLFQQAISP (234 aa)) constitute an ABC transporter 2 domain. ATP-binding positions include Y1221 and 1246–1253 (GRTGSGKS). The interval 1388-1482 (RALKQAFADC…AEEEVQDTRL (95 aa)) is interaction with GORASP2. C1397 is lipidated: S-palmitoyl cysteine. A phosphoserine mark is found at S1446 and S1458. The segment at 1454-1482 (QRSSSKHRSRAQITALKEEAEEEVQDTRL) is disordered. Residues 1472–1482 (EAEEEVQDTRL) are compositionally biased toward acidic residues. Positions 1480-1482 (TRL) match the PDZ-binding motif.

This sequence belongs to the ABC transporter superfamily. ABCC family. CFTR transporter (TC 3.A.1.202) subfamily. As to quaternary structure, monomer; does not require oligomerization for channel activity. May form oligomers in the membrane. Interacts with SLC26A3, SLC26A6 and NHERF1. Interacts with SHANK2. Interacts with MYO6. Interacts (via C-terminus) with GOPC (via PDZ domain); this promotes CFTR internalization and thereby decreases channel activity. Interacts with SLC4A7 through NHERF1. Found in a complex with MYO5B and RAB11A. Interacts with ANO1. Interacts with SLC26A8. Interacts with AHCYL1; the interaction increases CFTR activity. Interacts with CSE1L. The core-glycosylated form interacts with GORASP2 (via PDZ GRASP-type 1 domain) in respone to ER stress. Interacts with MARCHF2; the interaction leads to CFTR ubiqtuitination and degradation. Interacts with ADGRG2. N-glycosylated. In terms of processing, phosphorylated; cAMP treatment promotes phosphorylation and activates the channel. Dephosphorylation decreases the ATPase activity (in vitro). Phosphorylation at PKA sites activates the channel. Phosphorylation at PKC sites enhances the response to phosphorylation by PKA. Phosphorylated by AMPK; this inhibits channel activity. Post-translationally, ubiquitinated, leading to its degradation in the lysosome. Deubiquitination by USP10 in early endosomes enhances its endocytic recycling to the cell membrane. Ubiquitinated by RNF185 during ER stress. Ubiquitinated by MARCHF2.

Its subcellular location is the apical cell membrane. The protein resides in the early endosome membrane. The protein localises to the cell membrane. It is found in the recycling endosome membrane. It localises to the endoplasmic reticulum membrane. Its subcellular location is the nucleus. The catalysed reaction is ATP + H2O + closed Cl(-) channel = ADP + phosphate + open Cl(-) channel.. It catalyses the reaction chloride(in) = chloride(out). It carries out the reaction hydrogencarbonate(in) = hydrogencarbonate(out). The enzyme catalyses ATP + H2O = ADP + phosphate + H(+). Epithelial ion channel that plays an important role in the regulation of epithelial ion and water transport and fluid homeostasis. Mediates the transport of chloride ions across the cell membrane. Possesses an intrinsic ATPase activity and utilizes ATP to gate its channel; the passive flow of anions through the channel is gated by cycles of ATP binding and hydrolysis by the ATP-binding domains. The ion channel is also permeable to HCO(3)(-); selectivity depends on the extracellular chloride concentration. Exerts its function also by modulating the activity of other ion channels and transporters. Contributes to the regulation of the pH and the ion content of the epithelial fluid layer. Modulates the activity of the epithelial sodium channel (ENaC) complex, in part by regulating the cell surface expression of the ENaC complex. May regulate bicarbonate secretion and salvage in epithelial cells by regulating the transporter SLC4A7. Can inhibit the chloride channel activity of ANO1. Plays a role in the chloride and bicarbonate homeostasis during sperm epididymal maturation and capacitation. This is Cystic fibrosis transmembrane conductance regulator from Rhinolophus ferrumequinum (Greater horseshoe bat).